We begin with the raw amino-acid sequence, 112 residues long: Protein ORF3 (112 aa).

Hydrophobic stretches follow at residues 7–23 (ALGLFCFCSSCFCLCCP) and 40–60 (AAVVSGVTGLILSPSPSPIFI). Positions 28–66 (VSRLAVAAGKRGAAVVSGVTGLILSPSPSPIFIQPTPSH) are interaction with host HPX. The homodimerization, and interaction with host AMBP/bikunin stretch occupies residues 70 to 112 (QPPPGLELALGSQSVHSAPLGVTSPSAPPLPPVVDLPQLGLRR). The segment at 89-112 (LGVTSPSAPPLPPVVDLPQLGLRR) is disordered. The interaction with host SRC, HCK, FYN, PIK3R3 and GRB2 stretch occupies residues 93–102 (SPSAPPLPPV). Residues 94-97 (PSAP) carry the PTAP/PSAP motif motif.

Belongs to the hepevirus ORF3 protein family. Forms homooligomers. Interacts with host SRC, HCK, FYN, PIK3R3 and GRB2 (via SH3 domain); binding does not activate the kinases. Interacts with host AMBP/bikunin and AMBP/alpha-1-microglobulin peptides. Interacts with host HPX/hemopexin. Interacts (when phosphorylated) with capsid protein ORF2. Interacts with host TSG101; this interaction plays a role in viral release from the host cell. Interacts with host SIRPA; this interaction down-regulates the phosphorylation of host IRF3. Post-translationally, palmitoylated in the N-terminus.

The protein localises to the host endoplasmic reticulum membrane. Its subcellular location is the host cytoplasm. The protein resides in the host cytoskeleton. It localises to the virion. It is found in the host cell membrane. Its function is as follows. Small multifunctional phosphoprotein involved in virion morphogenesis, egress and counteracting host innate immunity. Plays critical roles in the final steps of viral release by interacting with host TSG101, a member of the vacuolar protein-sorting pathway and using other cellular host proteins involved in vesicle formation pathway. Also acts as a viroporin and forms ion conductive pores allowing viral particle release. Impairs the generation of type I interferon by down-regulating host TLR3 and TLR7 as well as their downstream signaling pathways. Down-regulates the phosphorylation of host IRF3 via the interaction with host SIRP-alpha, thereby inhibiting IFN-I expression. Interacts with host microtubules. In Bandicota bengalensis (lesser bandicoot rat), this protein is Protein ORF3.